The sequence spans 677 residues: Sulfate transporter 2.2 (677 aa).

Residues 1 to 110 (MQLSSLSHTS…QYKLNLFKKD (110 aa)) lie on the Cytoplasmic side of the membrane. Residues 111–131 (LMAGLTLASLCIPQSIGYANL) traverse the membrane as a helical segment. Residues 132-133 (AG) lie on the Extracellular side of the membrane. Residues 134-154 (LDPEYGLYTSVVPPLIYSTMG) traverse the membrane as a helical segment. Topologically, residues 155-158 (TSRE) are cytoplasmic. The helical transmembrane segment at 159-179 (LAIGPVAVVSLLLSSMVRDLQ) threads the bilayer. Over 180–190 (DPVTDPIAYRK) the chain is Extracellular. Residues 191 to 211 (IVFTVTFFAGAFQAIFGLFRL) form a helical membrane-spanning segment. The Cytoplasmic segment spans residues 212–213 (GF). The helical transmembrane segment at 214–234 (LVDFLSHAALVGFMAGAAIVI) threads the bilayer. The Extracellular segment spans residues 235–270 (GLQQLKGLFGLTHFTNKTDVVSVLSSVFHSLHHPWQ). Asparagine 250 is a glycosylation site (N-linked (GlcNAc...) asparagine). A helical transmembrane segment spans residues 271-291 (PLNFVIGSSFLIFILLARFIG). Residues 292 to 296 (KRNNK) lie on the Cytoplasmic side of the membrane. Residues 297-317 (LFWIPAMAPLISVVLATLIVY) traverse the membrane as a helical segment. The Extracellular segment spans residues 318–352 (LSNAESRGVKIVKHIKPGFNQLSVNQLQFKSPHLG). The chain crosses the membrane as a helical span at residues 353-373 (QIAKIGLISAIIALTEAIAVG). Residues 374–389 (RSFATIKGYRLDGNKE) lie on the Cytoplasmic side of the membrane. Residues 390–410 (MMAMGFMNIAGSLSSCYVATG) form a helical membrane-spanning segment. The Extracellular segment spans residues 411–422 (SFSRTAVNFSAG). N-linked (GlcNAc...) asparagine glycosylation is present at asparagine 418. A helical transmembrane segment spans residues 423-443 (CETVVSNIVMAITVMISLEVL). Residues 444 to 446 (TRF) are Cytoplasmic-facing. A helical membrane pass occupies residues 447–467 (LYFTPTAILASIILSALPGLI). At 468–482 (DVSGALHIWKLDKLD) the chain is on the extracellular side. A helical transmembrane segment spans residues 483–503 (FLVLIAAFFGVLFASVEIGLL). The Cytoplasmic segment spans residues 504 to 677 (LAVGISFARI…RARSTSHELC (174 aa)). In terms of domain architecture, STAS spans 540–666 (YPMANKTAGL…MTVGEAVDIY (127 aa)).

It belongs to the SLC26A/SulP transporter (TC 2.A.53) family. In terms of tissue distribution, expressed in the phloem in roots and in the phloem of vascular bundles in leaves.

Its subcellular location is the membrane. Functionally, low-affinity H(+)/sulfate cotransporter that may be involved in the distribution of sulfate from vascular bundles to the palisade cells of the leaves. Plays a central role in the regulation of sulfate assimilation. The polypeptide is Sulfate transporter 2.2 (SULTR2;2) (Arabidopsis thaliana (Mouse-ear cress)).